The following is a 712-amino-acid chain: Osmolarity two-component system protein SSK1 (712 aa).

Positions 73–114 (ADNTSSNNTNDNSCRSKSNGAGSGANLSVNSNTKSSVSPTAG) are disordered. A compositionally biased stretch (low complexity) spans 74 to 85 (DNTSSNNTNDNS). A compositionally biased stretch (polar residues) spans 87–113 (RSKSNGAGSGANLSVNSNTKSSVSPTA). Ser110, Ser195, Ser327, Ser351, Ser368, and Ser380 each carry phosphoserine. The segment at 340 to 362 (KADLKGKDGNSSPQEFKLITDEE) is disordered. A disordered region spans residues 448 to 468 (EVQRRKEDVTPASPILTSSQT). The region spanning 505–647 (NVLIVEDNVI…WLSKKITEWG (143 aa)) is the Response regulatory domain. 4-aspartylphosphate is present on Asp554. Positions 672-712 (KSPQKPIAPSNPHSFKQATSMTPTHSPVRKNSNLSPTQIEL) are disordered. Ser673 carries the post-translational modification Phosphoserine. Positions 682–712 (NPHSFKQATSMTPTHSPVRKNSNLSPTQIEL) are enriched in polar residues. Residue Thr693 is modified to Phosphothreonine. 2 positions are modified to phosphoserine: Ser703 and Ser706.

The protein belongs to the SSK1 family. In terms of assembly, interacts with SSK2, SSK22 and YPD1. In terms of processing, the phosphorelay mechanism involves the sequential transfer of a phosphate group from 'His-576' (H1) to 'Asp-1144' (D1) of SLN1, then to 'His-64' (H2) of YPD1 and finally to Asp-554 (D2) of SSK1.

It localises to the cytoplasm. Functionally, final receptor of the SLN1-YPD1-SSK1 two-component regulatory system, which controls activity of the HOG1 pathway in response to changes in the osmolarity of the extracellular environment. Under normal osmotic conditions, maintained in a phosphorylated and inactive state by the phosphorelay intermediate protein YPD1. Under conditions of high osmolarity, the histidine kinase SLN1 is no longer active and the unphosphorylated form of SSK1 interacts with and activates SSK2 and SSK22, two MAPKKKs that further stimulate the PBS2-HOG1 MAPKK-MAPK cascade. Unphosphorylated SSK1 is subsequently degraded by the UBC7-dependent ubiquitin-proteasome system to down-regulate the HOG1 pathway after completion of the osmotic adaptation. The chain is Osmolarity two-component system protein SSK1 from Saccharomyces cerevisiae (strain ATCC 204508 / S288c) (Baker's yeast).